We begin with the raw amino-acid sequence, 184 residues long: Nucleoside triphosphate pyrophosphatase (184 aa).

The active-site Proton acceptor is D66.

Belongs to the Maf family. A divalent metal cation serves as cofactor.

The protein localises to the cytoplasm. It carries out the reaction a ribonucleoside 5'-triphosphate + H2O = a ribonucleoside 5'-phosphate + diphosphate + H(+). It catalyses the reaction a 2'-deoxyribonucleoside 5'-triphosphate + H2O = a 2'-deoxyribonucleoside 5'-phosphate + diphosphate + H(+). Functionally, nucleoside triphosphate pyrophosphatase. May have a dual role in cell division arrest and in preventing the incorporation of modified nucleotides into cellular nucleic acids. This Prochlorococcus marinus (strain MIT 9313) protein is Nucleoside triphosphate pyrophosphatase.